The following is a 580-amino-acid chain: Serine/threonine-protein kinase srk1 (580 aa).

Over residues 51–61 the composition is skewed to polar residues; sequence VADSTQNPTSK. The disordered stretch occupies residues 51–91; that stretch reads VADSTQNPTSKPKSRHAHFHETVHENPSEYSRSKCKQPTNE. Residues 124 to 421 enclose the Protein kinase domain; that stretch reads YTLLQKMGDG…IHQFLAHPWI (298 aa). ATP-binding positions include 130 to 138 and lysine 153; that span reads MGDGAFSNV. Aspartate 257 serves as the catalytic Proton acceptor. Residues 530-580 form a disordered region; the sequence is NLSGENDPSLASRQPAQSQQQSSQRSRNKFKGFQLNLSKATLYNRRHRQKV. Low complexity predominate over residues 537–554; the sequence is PSLASRQPAQSQQQSSQR.

The protein belongs to the protein kinase superfamily. CAMK Ser/Thr protein kinase family. CaMK subfamily. Mg(2+) is required as a cofactor. Phosphorylated by sty1.

It is found in the cytoplasm. The protein resides in the nucleus. Its subcellular location is the nucleolus. The protein localises to the spore core. It catalyses the reaction L-seryl-[protein] + ATP = O-phospho-L-seryl-[protein] + ADP + H(+). The enzyme catalyses L-threonyl-[protein] + ATP = O-phospho-L-threonyl-[protein] + ADP + H(+). Its function is as follows. Delays the mitotic G2/M transition by promoting nuclear exclusion of cdc25. During osmotic stress, inhibits the G2/M transition in a sty1 stress-activated MAPK pathway-dependent manner. The chain is Serine/threonine-protein kinase srk1 from Schizosaccharomyces pombe (strain 972 / ATCC 24843) (Fission yeast).